Reading from the N-terminus, the 226-residue chain is MVSPENTNWLSDYPLIEGAFSDQNPTFPWQIDGSATVSVEVDGFLCDADVIKEPSSRKRIKTESCTGSNSKACREKQRRDRLNDKFTELSSVLEPGRTPKTDKVAIINDAIRMVNQARDEAQKLKDLNSSLQEKIKELKDEKNELRDEKQKLKVEKERIDQQLKAIKTQPQPQPCFLPNPQTLSQAQAPGSKLVPFTTYPGFAMWQFMPPAAVDTSQDHVLRPPVA.

The bHLH domain maps to threonine 66–alanine 117.

In terms of assembly, homodimer. Interacts with BTS and BHLH47/PYE.

The protein resides in the nucleus. The chain is Transcription factor bHLH115 (BHLH115) from Arabidopsis thaliana (Mouse-ear cress).